The chain runs to 404 residues: Acetate kinase (404 aa).

Asn7 lines the Mg(2+) pocket. Residue Lys14 participates in ATP binding. Substrate is bound at residue Arg95. Residue Asp152 is the Proton donor/acceptor of the active site. ATP is bound by residues 212 to 216, 286 to 288, and 334 to 338; these read HLGNG, DMR, and GIGEN. Glu388 contacts Mg(2+).

It belongs to the acetokinase family. In terms of assembly, homodimer. The cofactor is Mg(2+). It depends on Mn(2+) as a cofactor.

The protein localises to the cytoplasm. It catalyses the reaction acetate + ATP = acetyl phosphate + ADP. Its pathway is metabolic intermediate biosynthesis; acetyl-CoA biosynthesis; acetyl-CoA from acetate: step 1/2. Catalyzes the formation of acetyl phosphate from acetate and ATP. Can also catalyze the reverse reaction. The protein is Acetate kinase of Nitratidesulfovibrio vulgaris (strain DSM 19637 / Miyazaki F) (Desulfovibrio vulgaris).